The following is a 594-amino-acid chain: Potassium-transporting ATPase potassium-binding subunit (594 aa).

The next 12 membrane-spanning stretches (helical) occupy residues 4 to 24, 65 to 85, 136 to 156, 179 to 199, 287 to 307, 314 to 334, 361 to 381, 390 to 410, 413 to 433, 450 to 470, 518 to 538, and 560 to 580; these read QFFGLLVFYLAILLILAPFLG, QYAVAVLIFSVLGFIAVYALQ, ALTVQNFLSAAVGMSVLFALI, LYVLLPLALALALALVSQGVI, LEMLAILIIPAALCFTFGEMV, VAILAAMTLLFVGLAWLTQNA, FGVAASALFAVVTTAASCGAV, AMGGLGPMLLMQLGEVVFGGV, GLYGMLAFALLGVFIAGLMIG, MVSIAILVTPFLVLAGTALAV, LLGLAMWFGRFLVIVAILALA, and LFIVLLIGTVLLVGALTYVPA.

This sequence belongs to the KdpA family. As to quaternary structure, the system is composed of three essential subunits: KdpA, KdpB and KdpC.

The protein resides in the cell inner membrane. Functionally, part of the high-affinity ATP-driven potassium transport (or Kdp) system, which catalyzes the hydrolysis of ATP coupled with the electrogenic transport of potassium into the cytoplasm. This subunit binds the periplasmic potassium ions and delivers the ions to the membrane domain of KdpB through an intramembrane tunnel. This chain is Potassium-transporting ATPase potassium-binding subunit, found in Bordetella avium (strain 197N).